The following is a 76-amino-acid chain: Acyl carrier protein (76 aa).

In terms of domain architecture, Carrier spans 1–76 (MSVEEKISKI…DAIAYIKNKQ (76 aa)). The residue at position 36 (serine 36) is an O-(pantetheine 4'-phosphoryl)serine.

It belongs to the acyl carrier protein (ACP) family. Post-translationally, 4'-phosphopantetheine is transferred from CoA to a specific serine of apo-ACP by AcpS. This modification is essential for activity because fatty acids are bound in thioester linkage to the sulfhydryl of the prosthetic group.

It is found in the cytoplasm. It participates in lipid metabolism; fatty acid biosynthesis. Carrier of the growing fatty acid chain in fatty acid biosynthesis. This Nitratidesulfovibrio vulgaris (strain DSM 19637 / Miyazaki F) (Desulfovibrio vulgaris) protein is Acyl carrier protein.